The chain runs to 675 residues: Acyl-coenzyme A oxidase 3, peroxisomal (675 aa).

The N-terminal 34 residues, 1-34, are a transit peptide targeting the peroxisome; that stretch reads MSDNRALRRAHVLANHILQSNPPSSNPSLSRELC. 442–457 contributes to the FAD binding site; sequence AVGGQGVKTENLVGQL.

This sequence belongs to the acyl-CoA oxidase family. FAD is required as a cofactor. As to expression, most abundant in flowers and senescing rosette leaves. Lower expression in hypocotyls, stems, young rosette leaves, cotyledons, cauline leaves and root tip of young seedlings.

It is found in the peroxisome. The catalysed reaction is a 2,3-saturated acyl-CoA + O2 = a (2E)-enoyl-CoA + H2O2. The protein operates within lipid metabolism; peroxisomal fatty acid beta-oxidation. Catalyzes the desaturation of medium-chain acyl-CoAs to 2-trans-enoyl-CoAs. Active on C8:0- to C14:0-CoA with a maximal activity on C12:0-CoA. The sequence is that of Acyl-coenzyme A oxidase 3, peroxisomal (ACX3) from Arabidopsis thaliana (Mouse-ear cress).